The primary structure comprises 146 residues: Large ribosomal subunit protein uL15 (146 aa).

The interval 1-54 (MTIKLHDLRPAPGSKTPRTRVGRGEGSKGKTAGRGTKGTKARKQVPTTFEGGQM) is disordered.

The protein belongs to the universal ribosomal protein uL15 family. In terms of assembly, part of the 50S ribosomal subunit.

Binds to the 23S rRNA. The protein is Large ribosomal subunit protein uL15 of Mycobacterium marinum (strain ATCC BAA-535 / M).